The chain runs to 868 residues: Thiol protease/hemagglutinin PrtT (868 aa).

The N-terminal stretch at 1–27 (MKRIFYTLGLLLLCLPMLQAGPVTRSK) is a signal peptide. Residues Cys184 and His327 contribute to the active site.

Belongs to the peptidase C10 family.

Appears to be specific for arginine-containing peptide bonds. Possesses hemagglutinin activity. In Porphyromonas gingivalis (Bacteroides gingivalis), this protein is Thiol protease/hemagglutinin PrtT (prtT).